Consider the following 606-residue polypeptide: Retrovirus-related Pol polyprotein from type-1 retrotransposable element R2 (606 aa).

A Reverse transcriptase domain is found at Gly1–Phe208. A nucleic acid-binding endonuclease region spans residues Ile331–Pro606.

It catalyses the reaction DNA(n) + a 2'-deoxyribonucleoside 5'-triphosphate = DNA(n+1) + diphosphate. This is Retrovirus-related Pol polyprotein from type-1 retrotransposable element R2 from Popillia japonica (Japanese beetle).